A 124-amino-acid chain; its full sequence is Small ribosomal subunit protein uS12 (124 aa).

The disordered stretch occupies residues 8–30 (IRSARQDTEKQTKSPALKSCPQR). A 3-methylthioaspartic acid modification is found at Asp-89. The disordered stretch occupies residues 103–124 (DTAGVKDRKQSRSKYGAKKPKA). The segment covering 113 to 124 (SRSKYGAKKPKA) has biased composition (basic residues).

This sequence belongs to the universal ribosomal protein uS12 family. In terms of assembly, part of the 30S ribosomal subunit. Contacts proteins S8 and S17. May interact with IF1 in the 30S initiation complex.

Its function is as follows. With S4 and S5 plays an important role in translational accuracy. Interacts with and stabilizes bases of the 16S rRNA that are involved in tRNA selection in the A site and with the mRNA backbone. Located at the interface of the 30S and 50S subunits, it traverses the body of the 30S subunit contacting proteins on the other side and probably holding the rRNA structure together. The combined cluster of proteins S8, S12 and S17 appears to hold together the shoulder and platform of the 30S subunit. The protein is Small ribosomal subunit protein uS12 of Trichodesmium erythraeum (strain IMS101).